Consider the following 76-residue polypeptide: Small nuclear ribonucleoprotein G (76 aa).

In terms of domain architecture, Sm spans 4-76 (AHPPELKKFM…IIMLEALERV (73 aa)).

The protein belongs to the snRNP Sm proteins family. In terms of assembly, core component of the spliceosomal U1, U2, U4 and U5 small nuclear ribonucleoproteins (snRNPs), the building blocks of the spliceosome. Most spliceosomal snRNPs contain a common set of Sm proteins, SNRPB, SNRPD1, SNRPD2, SNRPD3, SNRPE, SNRPF and SNRPG that assemble in a heptameric protein ring on the Sm site of the small nuclear RNA to form the core snRNP. Component of the U1 snRNP. The U1 snRNP is composed of the U1 snRNA and the 7 core Sm proteins SNRPB, SNRPD1, SNRPD2, SNRPD3, SNRPE, SNRPF and SNRPG, and at least three U1 snRNP-specific proteins SNRNP70/U1-70K, SNRPA/U1-A and SNRPC/U1-C. Component of the U4/U6-U5 tri-snRNP complex composed of the U4, U6 and U5 snRNAs and at least PRPF3, PRPF4, PRPF6, PRPF8, PRPF31, SNRNP200, TXNL4A, SNRNP40, SNRPB, SNRPD1, SNRPD2, SNRPD3, SNRPE, SNRPF, SNRPG, DDX23, CD2BP2, PPIH, SNU13, EFTUD2, SART1 and USP39, plus LSM2, LSM3, LSM4, LSM5, LSM6, LSM7 and LSM8. Component of the U7 snRNP complex, or U7 Sm protein core complex, that is composed of the U7 snRNA and at least LSM10, LSM11, SNRPB, SNRPD3, SNRPE, SNRPF and SNRPG; the complex does not contain SNRPD1 and SNRPD2. Component of the minor spliceosome, which splices U12-type introns. Part of the SMN-Sm complex that contains SMN1, GEMIN2/SIP1, DDX20/GEMIN3, GEMIN4, GEMIN5, GEMIN6, GEMIN7, GEMIN8, STRAP/UNRIP and the Sm proteins SNRPB, SNRPD1, SNRPD2, SNRPD3, SNRPE, SNRPF and SNRPG; catalyzes core snRNPs assembly. Forms a 6S pICln-Sm complex composed of CLNS1A/pICln, SNRPD1, SNRPD2, SNRPE, SNRPF and SNRPG; ring-like structure where CLNS1A/pICln mimics additional Sm proteins and which is unable to assemble into the core snRNP. Interacts with GEMIN2 (via N-terminus); the interaction is direct. Interacts with SNRPE; the interaction is direct.

It localises to the cytoplasm. Its subcellular location is the cytosol. The protein resides in the nucleus. In terms of biological role, plays a role in pre-mRNA splicing as a core component of the spliceosomal U1, U2, U4 and U5 small nuclear ribonucleoproteins (snRNPs), the building blocks of the spliceosome. Component of both the pre-catalytic spliceosome B complex and activated spliceosome C complexes. As a component of the minor spliceosome, involved in the splicing of U12-type introns in pre-mRNAs. As part of the U7 snRNP it is involved in histone 3'-end processing. The protein is Small nuclear ribonucleoprotein G (SNRPG) of Bos taurus (Bovine).